The following is a 500-amino-acid chain: MEPSQRSGSFSSISRRRSRVDSRPTYFKVTSKDLGFVDQVSEEYEFYTYPKKASEVESVTETFQSNRSSLVPTYPVDENANKLPPKVSIAFILINSLMSDMSLAVALPTSASYTQSLGGTNAFSGLVIGIPTLISLIFLYPMLCFANPKSANGYTLYFRPMVVSSFAHIFGHLLYCMAYRANWIYLILIGRMLNGIGFTTFLYHKKYTTDKLLVGQNRRTFLATMNILAQTLGFMAGPFLGGILAKATIHSKNAVWNQYTVASWVMLFMWFFYMLTIIFFFKEVTADKSEKVSQQKENDDEDRPKLSWKHKFLLFFLAEVAFIAYFTVNGYQASISIYTGKLYNYDAFQSGNFIALSALIVAPFILASSFLSRWLEDRHIMLGGLFLGILAVAIHLVLDAVHKLPMQVYFFLYSLMIYGYSIGSAPLISLSSKQLHPRHHNTASIVVQVGVSLSNTFGSICGGAIYNITTVGFISLCLGLAAVVYMQLIFMWGSLKCKTH.

Over residues Met1–Ile13 the composition is skewed to low complexity. The disordered stretch occupies residues Met1–Arg23. Ser9 bears the Phosphoserine mark. 12 helical membrane-spanning segments follow: residues Val87–Leu107, Leu126–Ala146, Leu156–Cys176, Trp183–Tyr203, Met225–Ala245, Val261–Phe281, Phe312–Gln332, Gly351–Leu371, Ile380–Ala400, Val408–Ile428, Ile445–Ile465, and Val471–Met491.

This sequence belongs to the major facilitator superfamily.

Its subcellular location is the golgi apparatus. It is found in the membrane. This is an uncharacterized protein from Schizosaccharomyces pombe (strain 972 / ATCC 24843) (Fission yeast).